Consider the following 209-residue polypeptide: Outer-membrane lipoprotein carrier protein (209 aa).

Residues 1–23 (MKNLLKKSLLGLAFLSLNGFAFA) form the signal peptide.

This sequence belongs to the LolA family. In terms of assembly, monomer.

It localises to the periplasm. Functionally, participates in the translocation of lipoproteins from the inner membrane to the outer membrane. Only forms a complex with a lipoprotein if the residue after the N-terminal Cys is not an aspartate (The Asp acts as a targeting signal to indicate that the lipoprotein should stay in the inner membrane). In Glaesserella parasuis serovar 5 (strain SH0165) (Haemophilus parasuis), this protein is Outer-membrane lipoprotein carrier protein.